We begin with the raw amino-acid sequence, 78 residues long: Small integral membrane protein 1 (78 aa).

Residue methionine 1 is modified to N-acetylmethionine. Positions methionine 1–arginine 18 are enriched in basic and acidic residues. The segment at methionine 1–glycine 20 is disordered. The Cytoplasmic portion of the chain corresponds to methionine 1–lysine 46. A phosphoserine mark is found at serine 6, serine 17, serine 22, and serine 27. The helical; Signal-anchor for type II membrane protein transmembrane segment at leucine 47–glycine 67 threads the bilayer. Topologically, residues tyrosine 68–lysine 78 are extracellular. Residues tyrosine 68–lysine 78 form a displays the Vel antigen region.

Belongs to the SMIM1 family. As to quaternary structure, homooligomer; disulfide-linked. In terms of tissue distribution, highly expressed in the bone marrow and expressed at lower levels in non-hematopoietic tissues. Highly expressed in erythroleukemia cell lines. Up-regulated in CD34+ hematopoietic progenitors cultured toward red blood cells.

The protein resides in the cell membrane. Its function is as follows. Regulator of red blood cell formation. The sequence is that of Small integral membrane protein 1 from Homo sapiens (Human).